The sequence spans 860 residues: Gag-Pro polyprotein (860 aa).

Residue Gly-2 is the site of N-myristoyl glycine; by host attachment. Basic and acidic residues-rich tracts occupy residues 154-169 (PYEEKEKADKNEEKDH) and 178-193 (QRKENSEHKRKEKDQK). The interval 154-193 (PYEEKEKADKNEEKDHVRKVKKIVQRKENSEHKRKEKDQK) is disordered. The short motif at 305 to 308 (PSAP) is the PTAP/PSAP motif element. 2 consecutive CCHC-type zinc fingers follow at residues 525-542 (PVCFSCGKTGHIKRDCKE) and 552-569 (GLCPRCKKGYHWKSECKS). Residues 572 to 631 (DKDGNPLPPLETNAENSKNLVKGQSPSPTQKGDKGKDSGLNPEAPPFTIHDLPRGTPGSA) are disordered. The span at 584–601 (NAENSKNLVKGQSPSPTQ) shows a compositional bias: polar residues. The region spanning 766–841 (FLGLLDTGAD…LPFTLWGRDI (76 aa)) is the Peptidase A2 domain. The active-site Protease; shared with dimeric partner is the Asp-771.

In terms of assembly, homodimer; when myristoylated. As to quaternary structure, homodimer. NC-dUTPase is a homotrimer. Mg(2+) serves as cofactor. In terms of processing, released by autocatalytic processing. Myristoylated. Myristoylation of the matrix (MA) domain mediates the transport and binding of Gag polyproteins to the host plasma membrane and is required for the assembly of viral particles. Post-translationally, specific enzymatic cleavages in vivo yield mature proteins.

It localises to the virion. The enzyme catalyses dUTP + H2O = dUMP + diphosphate + H(+). Its activity is regulated as follows. Inhibited by pepstatin A. Functionally, matrix protein. In terms of biological role, nucleocapsid protein p14: Binds strongly to viral nucleic acids and promote their aggregation. Also destabilizes the nucleic acids duplexes via highly structured zinc-binding motifs. Capsid protein. Its function is as follows. NC-dUTPase has dUTPase activity, thereby preventing incorporation of uracil into DNA. Functionally, the aspartyl protease mediates proteolytic cleavages of Gag and Gag-Pol polyproteins during or shortly after the release of the virion from the plasma membrane. Cleavages take place as an ordered, step-wise cascade to yield mature proteins. This process is called maturation. Displays maximal activity during the budding process just prior to particle release from the cell. This is Gag-Pro polyprotein (gag-pro) from Mus musculus (Mouse).